The sequence spans 496 residues: Ankyrin repeat domain-containing protein 34A (496 aa).

4 ANK repeats span residues 4 to 33, 37 to 72, 76 to 106, and 110 to 139; these read TEGH…YVNE, QGET…DPNI, LGRT…DPSV, and AGAS…AKGT. Gln15 is subject to N5-methylglutamine. Polar residues-rich tracts occupy residues 147 to 162 and 180 to 191; these read DTSP…YLNS and FCTSPSEIQLQT. The segment at 147–473 is disordered; sequence DTSPSGTKKT…TKRKLVRRHS (327 aa). The segment covering 204-214 has biased composition (basic and acidic residues); sequence AQEEEEKRDVF. Over residues 218 to 233 the composition is skewed to pro residues; sequence LPKPPDDPSPSEPLPK. A compositionally biased stretch (basic residues) spans 234–243; that stretch reads PPRHPPKPLK. Thr316 carries the phosphothreonine modification. Over residues 463 to 473 the composition is skewed to basic residues; the sequence is RTKRKLVRRHS.

Belongs to the ANKRD34 family. Post-translationally, methylated at Gln-15 by N6AMT1.

The chain is Ankyrin repeat domain-containing protein 34A (ANKRD34A) from Homo sapiens (Human).